A 541-amino-acid chain; its full sequence is Chlorophyllide a oxygenase, chloroplastic (541 aa).

Residues 114-151 (LAREFKSIGTLRKELAELQEELAKAHNQVHLSETRVSS) are a coiled coil. The span at 178–192 (AECTSLAPSTSSASR) shows a compositional bias: polar residues. Residues 178 to 208 (AECTSLAPSTSSASRVVNKKPPRRSLNVSGP) form a disordered region. Residues 220–320 (WYPVAFSSDL…CFEQEGMVWI (101 aa)) form the Rieske domain. [2Fe-2S] cluster-binding residues include C261, H263, C280, and H283. The Fe cation site is built by D359, D363, H366, and H371.

As to expression, expressed in leaves and germinating seedlings, but not in sheaths and roots.

It is found in the plastid. The protein localises to the chloroplast membrane. The protein resides in the chloroplast thylakoid membrane. The enzyme catalyses chlorophyllide a + 2 NADPH + 2 O2 + 2 H(+) = chlorophyllide b + 2 NADP(+) + 3 H2O. Its function is as follows. Catalyzes a two-step oxygenase reaction involved in the synthesis of chlorophyll b. Acts specifically on the non-esterified chlorophyllide a and not on chlorophyll a. This Oryza sativa subsp. japonica (Rice) protein is Chlorophyllide a oxygenase, chloroplastic (CAO).